Here is a 508-residue protein sequence, read N- to C-terminus: CUGBP Elav-like family member 2 (508 aa).

2 necessary for RNA-binding, TNNT2 exon 5 and NMDA R1 exon 21 inclusion regions span residues 1–283 and 357–508; these read MRCP…LQNL and LAGM…SKPY. RRM domains are found at residues 40 to 123, 132 to 212, and 423 to 501; these read IKMF…PADS, RKLF…FADT, and ANLF…LKRS.

This sequence belongs to the CELF/BRUNOL family. Interacts with A1CF. In terms of tissue distribution, expressed in frontal cortex. Isoform 1 is expressed in brain and lung. Isoform 2 is expressed in heart, brain, placenta, lung, liver, kidney, skeletal muscle and pancreas. Isoform 4 is expressed in heart, lung, skeletal muscle, kidney and pancreas.

It localises to the nucleus. Its subcellular location is the cytoplasm. Functionally, RNA-binding protein implicated in the regulation of several post-transcriptional events. Involved in pre-mRNA alternative splicing, mRNA translation and stability. Mediates exon inclusion and/or exclusion in pre-mRNA that are subject to tissue-specific and developmentally regulated alternative splicing. Specifically activates exon 5 inclusion of TNNT2 in embryonic, but not adult, skeletal muscle. Activates TNNT2 exon 5 inclusion by antagonizing the repressive effect of PTB. Acts both as an activator and as a repressor of a pair of coregulated exons: promotes inclusion of the smooth muscle (SM) exon but exclusion of the non-muscle (NM) exon in actinin pre-mRNAs. Promotes inclusion of exonS 21 and exclusion of exon 5 of the NMDA receptor R1 pre-mRNA. Involved in the apoB RNA editing activity. Increases COX2 mRNA stability and inhibits COX2 mRNA translation in epithelial cells after radiation injury. Modulates the cellular apoptosis program by regulating COX2-mediated prostaglandin E2 (PGE2) expression. Binds to (CUG)n triplet repeats in the 3'-UTR of transcripts such as DMPK. Binds to the muscle-specific splicing enhancer (MSE) intronic sites flanking the TNNT2 alternative exon 5. Binds preferentially to UG-rich sequences, in particular UG repeat and UGUU motifs. Binds to apoB mRNA, specifically to AU-rich sequences located immediately upstream of the edited cytidine. Binds AU-rich sequences in the 3'-UTR of COX2 mRNA. Binds to an intronic RNA element responsible for the silencing of exon 21 splicing. Binds to (CUG)n repeats. May be a specific regulator of miRNA biogenesis. Binds to primary microRNA pri-MIR140 and, with CELF1, negatively regulates the processing to mature miRNA. The protein is CUGBP Elav-like family member 2 (CELF2) of Homo sapiens (Human).